The following is a 689-amino-acid chain: Glycine--tRNA ligase beta subunit (689 aa).

Belongs to the class-II aminoacyl-tRNA synthetase family. Tetramer of two alpha and two beta subunits.

It localises to the cytoplasm. The catalysed reaction is tRNA(Gly) + glycine + ATP = glycyl-tRNA(Gly) + AMP + diphosphate. The sequence is that of Glycine--tRNA ligase beta subunit from Shewanella amazonensis (strain ATCC BAA-1098 / SB2B).